A 228-amino-acid polypeptide reads, in one-letter code: UPF0173 metal-dependent hydrolase LMHCC_0991 (228 aa).

It belongs to the UPF0173 family.

The sequence is that of UPF0173 metal-dependent hydrolase LMHCC_0991 from Listeria monocytogenes serotype 4a (strain HCC23).